Consider the following 400-residue polypeptide: Aminomethyltransferase, mitochondrial (400 aa).

3 residues coordinate substrate: Glu-221, Arg-250, and Tyr-397.

The protein belongs to the GcvT family. As to quaternary structure, component of the glycine decarboxylase complex (GDC), which is composed of four proteins: P, T, L and H.

It is found in the mitochondrion. The enzyme catalyses N(6)-[(R)-S(8)-aminomethyldihydrolipoyl]-L-lysyl-[protein] + (6S)-5,6,7,8-tetrahydrofolate = N(6)-[(R)-dihydrolipoyl]-L-lysyl-[protein] + (6R)-5,10-methylene-5,6,7,8-tetrahydrofolate + NH4(+). Functionally, the glycine cleavage system (glycine decarboxylase complex) catalyzes the degradation of glycine. This is Aminomethyltransferase, mitochondrial (GCV1) from Saccharomyces cerevisiae (strain ATCC 204508 / S288c) (Baker's yeast).